Here is a 208-residue protein sequence, read N- to C-terminus: Uracil phosphoribosyltransferase (208 aa).

5-phospho-alpha-D-ribose 1-diphosphate contacts are provided by residues Arg-78, Arg-103, and 130–138 (DPMLATGGS). Residues Ile-193 and 198-200 (GDA) contribute to the uracil site. Position 199 (Asp-199) interacts with 5-phospho-alpha-D-ribose 1-diphosphate.

Belongs to the UPRTase family. Requires Mg(2+) as cofactor.

It catalyses the reaction UMP + diphosphate = 5-phospho-alpha-D-ribose 1-diphosphate + uracil. It functions in the pathway pyrimidine metabolism; UMP biosynthesis via salvage pathway; UMP from uracil: step 1/1. With respect to regulation, allosterically activated by GTP. Catalyzes the conversion of uracil and 5-phospho-alpha-D-ribose 1-diphosphate (PRPP) to UMP and diphosphate. In Psychromonas ingrahamii (strain DSM 17664 / CCUG 51855 / 37), this protein is Uracil phosphoribosyltransferase.